Consider the following 84-residue polypeptide: Large ribosomal subunit protein bL27 (84 aa).

Positions Met1–Gly22 are disordered.

This sequence belongs to the bacterial ribosomal protein bL27 family.

This is Large ribosomal subunit protein bL27 from Shewanella loihica (strain ATCC BAA-1088 / PV-4).